The following is a 435-amino-acid chain: ATP-dependent protease ATPase subunit HslU (435 aa).

ATP contacts are provided by residues isoleucine 18, 60–65 (GVGKTE), aspartate 248, glutamate 313, and arginine 385.

It belongs to the ClpX chaperone family. HslU subfamily. As to quaternary structure, a double ring-shaped homohexamer of HslV is capped on each side by a ring-shaped HslU homohexamer. The assembly of the HslU/HslV complex is dependent on binding of ATP.

It is found in the cytoplasm. In terms of biological role, ATPase subunit of a proteasome-like degradation complex; this subunit has chaperone activity. The binding of ATP and its subsequent hydrolysis by HslU are essential for unfolding of protein substrates subsequently hydrolyzed by HslV. HslU recognizes the N-terminal part of its protein substrates and unfolds these before they are guided to HslV for hydrolysis. The polypeptide is ATP-dependent protease ATPase subunit HslU (Rhizobium johnstonii (strain DSM 114642 / LMG 32736 / 3841) (Rhizobium leguminosarum bv. viciae)).